Here is a 287-residue protein sequence, read N- to C-terminus: rRNA adenine N-6-methyltransferase (287 aa).

The span at 1–13 shows a compositional bias: basic residues; that stretch reads MKKKNHKYRGKKL. The segment at 1–21 is disordered; the sequence is MKKKNHKYRGKKLNRGESPNF. Residues His-25, Met-27, Gly-52, Glu-73, Asp-98, and Asn-114 each coordinate S-adenosyl-L-methionine.

This sequence belongs to the class I-like SAM-binding methyltransferase superfamily. rRNA adenine N(6)-methyltransferase family. As to quaternary structure, homodimer.

Its function is as follows. Involved in erythromycin resistance. This is rRNA adenine N-6-methyltransferase (ermJ) from Bacillus anthracis.